Reading from the N-terminus, the 514-residue chain is ATP synthase subunit alpha (514 aa).

170–177 is an ATP binding site; sequence GDRQTGKT.

This sequence belongs to the ATPase alpha/beta chains family. In terms of assembly, F-type ATPases have 2 components, CF(1) - the catalytic core - and CF(0) - the membrane proton channel. CF(1) has five subunits: alpha(3), beta(3), gamma(1), delta(1), epsilon(1). CF(0) has three main subunits: a(1), b(2) and c(9-12). The alpha and beta chains form an alternating ring which encloses part of the gamma chain. CF(1) is attached to CF(0) by a central stalk formed by the gamma and epsilon chains, while a peripheral stalk is formed by the delta and b chains.

Its subcellular location is the cell inner membrane. The enzyme catalyses ATP + H2O + 4 H(+)(in) = ADP + phosphate + 5 H(+)(out). In terms of biological role, produces ATP from ADP in the presence of a proton gradient across the membrane. The alpha chain is a regulatory subunit. This Psychrobacter arcticus (strain DSM 17307 / VKM B-2377 / 273-4) protein is ATP synthase subunit alpha.